A 201-amino-acid polypeptide reads, in one-letter code: Adenylyl-sulfate kinase (201 aa).

35 to 42 (GLSGSGKS) contacts ATP. Ser-109 acts as the Phosphoserine intermediate in catalysis.

It belongs to the APS kinase family.

It catalyses the reaction adenosine 5'-phosphosulfate + ATP = 3'-phosphoadenylyl sulfate + ADP + H(+). It functions in the pathway sulfur metabolism; hydrogen sulfide biosynthesis; sulfite from sulfate: step 2/3. Functionally, catalyzes the synthesis of activated sulfate. This Salmonella gallinarum (strain 287/91 / NCTC 13346) protein is Adenylyl-sulfate kinase.